A 238-amino-acid polypeptide reads, in one-letter code: Probable amino-acid ABC transporter permease protein y4tF (238 aa).

The ABC transmembrane type-1 domain occupies 29–223 (AWVTIQFTLY…GIALVLSFFM (195 aa)). The next 5 helical transmembrane spans lie at 33–53 (IQFTLYSMFFGAVCSFAFGIG), 77–97 (LLVQLFWLFFALPIAGDMMGI), 103–123 (PVVAGVLALSLNLGAYGAEIV), 152–172 (VALPQAIPEMMPSFSNLAIAA), and 203–223 (TVYTMVLLMYFGIALVLSFFM).

Belongs to the binding-protein-dependent transport system permease family. HisMQ subfamily.

The protein localises to the cell inner membrane. Functionally, probably part of the binding-protein-dependent transport system y4tEFGH for an amino acid. Probably responsible for the translocation of the substrate across the membrane. The sequence is that of Probable amino-acid ABC transporter permease protein y4tF from Sinorhizobium fredii (strain NBRC 101917 / NGR234).